Here is a 281-residue protein sequence, read N- to C-terminus: NADPH-dependent 7-cyano-7-deazaguanine reductase (281 aa).

A substrate-binding site is contributed by 88 to 90; that stretch reads IES. 90–91 serves as a coordination point for NADPH; the sequence is SK. Cys-189 serves as the catalytic Thioimide intermediate. Asp-196 (proton donor) is an active-site residue. 228-229 is a binding site for substrate; the sequence is HE. 257–258 lines the NADPH pocket; the sequence is RG.

Belongs to the GTP cyclohydrolase I family. QueF type 2 subfamily. As to quaternary structure, homodimer.

The protein localises to the cytoplasm. It carries out the reaction 7-aminomethyl-7-carbaguanine + 2 NADP(+) = 7-cyano-7-deazaguanine + 2 NADPH + 3 H(+). It functions in the pathway tRNA modification; tRNA-queuosine biosynthesis. In terms of biological role, catalyzes the NADPH-dependent reduction of 7-cyano-7-deazaguanine (preQ0) to 7-aminomethyl-7-deazaguanine (preQ1). The protein is NADPH-dependent 7-cyano-7-deazaguanine reductase of Yersinia pseudotuberculosis serotype O:1b (strain IP 31758).